A 112-amino-acid chain; its full sequence is SRA stem-loop-interacting RNA-binding protein, mitochondrial (112 aa).

A Phosphoserine modification is found at S15. Positions 19–98 constitute an RRM domain; sequence PIAFVRKIPW…IHVQAQRAKA (80 aa). Position 104 is a phosphothreonine (T104). The residue at position 105 (S105) is a Phosphoserine.

Its subcellular location is the mitochondrion. The protein localises to the nucleus. Its function is as follows. RNA-binding protein that acts as a nuclear receptor corepressor. Probably acts by binding the SRA RNA, and repressing the SRA-mediated nuclear receptor coactivation. Binds the STR7 loop of SRA RNA. Also able to repress glucocorticoid (GR), androgen (AR), thyroid (TR) and VDR-mediated transactivation. The chain is SRA stem-loop-interacting RNA-binding protein, mitochondrial (Slirp) from Mus musculus (Mouse).